The primary structure comprises 57 residues: UPF0391 membrane protein RPA3505 (57 aa).

The next 2 membrane-spanning stretches (helical) occupy residues 4–24 (WVVTFLVVALIAGLLGFGGIA) and 30–50 (IAKIIFFIAIVLFLVSAVISI).

Belongs to the UPF0391 family.

It is found in the cell membrane. The sequence is that of UPF0391 membrane protein RPA3505 from Rhodopseudomonas palustris (strain ATCC BAA-98 / CGA009).